A 363-amino-acid chain; its full sequence is 3,4-dihydroxy-2-butanone 4-phosphate synthase (363 aa).

The segment at 1 to 201 is DHBP synthase; the sequence is MTLSTAQEII…VADLIEYRNK (201 aa). Residues 27 to 28, Asp-32, 140 to 144, and Glu-164 each bind D-ribulose 5-phosphate; these read RE and RAGHT. Glu-28 serves as a coordination point for Mg(2+). Residue His-143 participates in Mg(2+) binding. Positions 202–363 are GTP cyclohydrolase II-like; it reads YETMIERISE…GLEIVEYVCS (162 aa).

In the N-terminal section; belongs to the DHBP synthase family. It in the C-terminal section; belongs to the GTP cyclohydrolase II family. Requires Mg(2+) as cofactor. Mn(2+) is required as a cofactor.

It carries out the reaction D-ribulose 5-phosphate = (2S)-2-hydroxy-3-oxobutyl phosphate + formate + H(+). It participates in cofactor biosynthesis; riboflavin biosynthesis; 2-hydroxy-3-oxobutyl phosphate from D-ribulose 5-phosphate: step 1/1. Its function is as follows. Catalyzes the conversion of D-ribulose 5-phosphate to formate and 3,4-dihydroxy-2-butanone 4-phosphate. This Photobacterium phosphoreum protein is 3,4-dihydroxy-2-butanone 4-phosphate synthase (ribB).